A 76-amino-acid polypeptide reads, in one-letter code: Protein TraJ (76 aa).

It is found in the cytoplasm. This protein is essential for positively regulating the expression of transfer genes that are involved in the conjugal transfer of DNA between bacterial cells. The polypeptide is Protein TraJ (traJ) (Escherichia coli).